Reading from the N-terminus, the 388-residue chain is Lipid-A-disaccharide synthase (388 aa).

It belongs to the LpxB family.

The enzyme catalyses a lipid X + a UDP-2-N,3-O-bis[(3R)-3-hydroxyacyl]-alpha-D-glucosamine = a lipid A disaccharide + UDP + H(+). It functions in the pathway bacterial outer membrane biogenesis; LPS lipid A biosynthesis. Its function is as follows. Condensation of UDP-2,3-diacylglucosamine and 2,3-diacylglucosamine-1-phosphate to form lipid A disaccharide, a precursor of lipid A, a phosphorylated glycolipid that anchors the lipopolysaccharide to the outer membrane of the cell. This is Lipid-A-disaccharide synthase from Burkholderia mallei (strain ATCC 23344).